The chain runs to 107 residues: Replication protein A 14 kDa subunit A (107 aa).

An N-acetylmethionine modification is found at M1.

It belongs to the replication factor A protein 3 family. As to quaternary structure, component of the heterotrimeric canonical replication protein A complex (RPA).

Its subcellular location is the nucleus. Functionally, as part of the replication protein A (RPA/RP-A), a single-stranded DNA-binding heterotrimeric complex, may play an essential role in DNA replication, recombination and repair. Binds and stabilizes single-stranded DNA intermediates, preventing complementary DNA reannealing and recruiting different proteins involved in DNA metabolism. This Arabidopsis thaliana (Mouse-ear cress) protein is Replication protein A 14 kDa subunit A (RPA3A).